The chain runs to 211 residues: Interleukin-6 (211 aa).

The first 24 residues, 1–24 (MKFLSARDFQPVAFLGLMLLTATA), serve as a signal peptide directing secretion. A disulfide bridge links cysteine 70 with cysteine 76. Phosphoserine is present on serine 79. An intrachain disulfide couples cysteine 99 to cysteine 109.

It belongs to the IL-6 superfamily. Component of a hexamer of two molecules each of IL6, IL6R and IL6ST; first binds to IL6R to associate with the signaling subunit IL6ST. Interacts with IL6R (via the N-terminal ectodomain); this interaction may be affected by IL6R-binding with SORL1, hence decreasing IL6 cis signaling. Interacts with SORL1 (via the N-terminal ectodomain); this interaction leads to IL6 internalization and lysosomal degradation. May form a trimeric complex with the soluble SORL1 ectodomain and soluble IL6R receptor; this interaction might stabilize circulating IL6, hence promoting IL6 trans signaling.

It is found in the secreted. Functionally, cytokine with a wide variety of biological functions in immunity, tissue regeneration, and metabolism. Binds to IL6R, then the complex associates to the signaling subunit IL6ST/gp130 to trigger the intracellular IL6-signaling pathway. The interaction with the membrane-bound IL6R and IL6ST stimulates 'classic signaling', whereas the binding of IL6 and soluble IL6R to IL6ST stimulates 'trans-signaling'. Alternatively, 'cluster signaling' occurs when membrane-bound IL6:IL6R complexes on transmitter cells activate IL6ST receptors on neighboring receiver cells. Its function is as follows. IL6 is a potent inducer of the acute phase response. Rapid production of IL6 contributes to host defense during infection and tissue injury, but excessive IL6 synthesis is involved in disease pathology. In the innate immune response, is synthesized by myeloid cells, such as macrophages and dendritic cells, upon recognition of pathogens through toll-like receptors (TLRs) at the site of infection or tissue injury. In the adaptive immune response, is required for the differentiation of B-cells into immunoglolin-secreting cells. Plays a major role in the differentiation of CD4(+) T cell subsets. Essential factor for the development of T follicular helper (Tfh) cells that are required for the induction of germinal-center formation. Together with IL21, controls the early generation of Tfh cells and are critical for an effective antibody response to acute viral infection. Required to drive naive CD4(+) T cells to the Th17 lineage, through 'cluster signaling' by dendritic cells. Also required for proliferation of myeloma cells and the survival of plasmablast cells. Acts as an essential factor in bone homeostasis and on vessels directly or indirectly by induction of VEGF, resulting in increased angiogenesis activity and vascular permeability. Induces, through 'trans-signaling' and synergistically with IL1B and TNF, the production of VEGF. Involved in metabolic controls, is discharged into the bloodstream after muscle contraction increasing lipolysis and improving insulin resistance. 'Trans-signaling' in central nervous system regulates energy and glucose homeostasis. Mediates, through GLP-1, crosstalk between insulin-sensitive tissues, intestinal L cells and pancreatic islets to adapt to changes in insulin demand. Also acts as a myokine. Plays a protective role during liver injury, being required for maintenance of tissue regeneration. Also has a pivotal role in iron metabolism by regulating HAMP/hepcidin expression upon inflammation or bacterial infection. Through activation of IL6ST-YAP-NOTCH pathway, induces inflammation-induced epithelial regeneration. This Rattus norvegicus (Rat) protein is Interleukin-6.